The chain runs to 929 residues: Bifunctional glutamine synthetase adenylyltransferase/adenylyl-removing enzyme (929 aa).

Residues 1–423 (MSTPIDSSRA…RHFEQIFAAR (423 aa)) form an adenylyl removase region. The adenylyl transferase stretch occupies residues 433-929 (ARIRPEQSGD…FQLWEDIFGT (497 aa)).

Belongs to the GlnE family. The cofactor is Mg(2+).

The enzyme catalyses [glutamine synthetase]-O(4)-(5'-adenylyl)-L-tyrosine + phosphate = [glutamine synthetase]-L-tyrosine + ADP. It carries out the reaction [glutamine synthetase]-L-tyrosine + ATP = [glutamine synthetase]-O(4)-(5'-adenylyl)-L-tyrosine + diphosphate. In terms of biological role, involved in the regulation of glutamine synthetase GlnA, a key enzyme in the process to assimilate ammonia. When cellular nitrogen levels are high, the C-terminal adenylyl transferase (AT) inactivates GlnA by covalent transfer of an adenylyl group from ATP to specific tyrosine residue of GlnA, thus reducing its activity. Conversely, when nitrogen levels are low, the N-terminal adenylyl removase (AR) activates GlnA by removing the adenylyl group by phosphorolysis, increasing its activity. The regulatory region of GlnE binds the signal transduction protein PII (GlnB) which indicates the nitrogen status of the cell. The chain is Bifunctional glutamine synthetase adenylyltransferase/adenylyl-removing enzyme from Nitrosomonas europaea (strain ATCC 19718 / CIP 103999 / KCTC 2705 / NBRC 14298).